A 245-amino-acid chain; its full sequence is Eukaryotic translation initiation factor 3 subunit K (245 aa).

The 182-residue stretch at tyrosine 46 to asparagine 227 folds into the PCI domain.

It belongs to the eIF-3 subunit K family. Component of the eukaryotic translation initiation factor 3 (eIF-3) complex.

It localises to the cytoplasm. Its function is as follows. Component of the eukaryotic translation initiation factor 3 (eIF-3) complex, which is involved in protein synthesis of a specialized repertoire of mRNAs and, together with other initiation factors, stimulates binding of mRNA and methionyl-tRNAi to the 40S ribosome. The eIF-3 complex specifically targets and initiates translation of a subset of mRNAs involved in cell proliferation. This is Eukaryotic translation initiation factor 3 subunit K from Phaeosphaeria nodorum (strain SN15 / ATCC MYA-4574 / FGSC 10173) (Glume blotch fungus).